A 148-amino-acid polypeptide reads, in one-letter code: UPF0178 protein Pcar_2632 (148 aa).

This sequence belongs to the UPF0178 family.

The protein is UPF0178 protein Pcar_2632 of Syntrophotalea carbinolica (strain DSM 2380 / NBRC 103641 / GraBd1) (Pelobacter carbinolicus).